The chain runs to 36 residues: Conotoxin Bu21 (36 aa).

A propeptide spanning residues 1 to 21 (DGANAEATDNKPGVFERDEKK) is cleaved from the precursor. Intrachain disulfides connect Cys22–Cys28 and Cys23–Cys34.

It belongs to the conotoxin A superfamily. Expressed by the venom duct.

The protein localises to the secreted. The sequence is that of Conotoxin Bu21 from Conus bullatus (Bubble cone).